Here is a 598-residue protein sequence, read N- to C-terminus: Probable translation initiation factor IF-2 (598 aa).

The 219-residue stretch at 8–226 (IRQPIISVLG…VTGLAQRFLE (219 aa)) folds into the tr-type G domain. The tract at residues 17–24 (GHVDHGKT) is G1. Residue 17–24 (GHVDHGKT) coordinates GTP. Positions 42-46 (GITQH) are G2. Residues 81–84 (DTPG) are G3. Residues 81–85 (DTPGH) and 135–138 (NKVD) each bind GTP. A G4 region spans residues 135-138 (NKVD). The interval 203-205 (SGV) is G5.

This sequence belongs to the TRAFAC class translation factor GTPase superfamily. Classic translation factor GTPase family. IF-2 subfamily.

In terms of biological role, function in general translation initiation by promoting the binding of the formylmethionine-tRNA to ribosomes. Seems to function along with eIF-2. In Methanopyrus kandleri (strain AV19 / DSM 6324 / JCM 9639 / NBRC 100938), this protein is Probable translation initiation factor IF-2.